Here is a 189-residue protein sequence, read N- to C-terminus: T-cell surface glycoprotein CD3 epsilon chain (189 aa).

Residues 1-21 (MRWNTFWGILCLSLLAVGTCQ) form the signal peptide. Residues 23-99 (DAENIEYKVS…KNTYLYLKAR (77 aa)) enclose the Ig-like domain. The Extracellular segment spans residues 23-108 (DAENIEYKVS…RVCEYCVEVD (86 aa)). An intrachain disulfide couples cysteine 42 to cysteine 83. A helical transmembrane segment spans residues 109-134 (LTAVAIIIIVDICITLGLLMVIYYWS). Residues 135–189 (KNRKAKAKPVTRGTGAGSRPRGQNKERPPPVPNPDYEPIRKGQRDLYSGLNQRAV) lie on the Cytoplasmic side of the membrane. Residues 143 to 189 (PVTRGTGAGSRPRGQNKERPPPVPNPDYEPIRKGQRDLYSGLNQRAV) are disordered. The segment at 157 to 174 (QNKERPPPVPNPDYEPIR) is NUMB-binding region. Residues 160–187 (ERPPPVPNPDYEPIRKGQRDLYSGLNQR) form the ITAM domain. Residues 161–168 (RPPPVPNP) are proline-rich sequence. 2 positions are modified to phosphotyrosine: tyrosine 170 and tyrosine 181.

The TCR-CD3 complex is composed of a CD3D/CD3E and a CD3G/CD3E heterodimers that preferentially associate with TCRalpha and TCRbeta, respectively, to form TCRalpha/CD3E/CD3G and TCRbeta/CD3G/CD3E trimers. In turn, the hexamer interacts with CD3Z homodimer to form the TCR-CD3 complex. Alternatively, TCRalpha and TCRbeta can be replaced by TCRgamma and TCRdelta. Interacts with CD6. Interacts (via Proline-rich sequence) with NCK1; the interaction is ligand dependent but independent of tyrosine kinase activation. Phosphorylated on Tyr residues after T-cell receptor triggering by LCK in association with CD4/CD8.

The protein resides in the cell membrane. Part of the TCR-CD3 complex present on T-lymphocyte cell surface that plays an essential role in adaptive immune response. When antigen presenting cells (APCs) activate T-cell receptor (TCR), TCR-mediated signals are transmitted across the cell membrane by the CD3 chains CD3D, CD3E, CD3G and CD3Z. All CD3 chains contain immunoreceptor tyrosine-based activation motifs (ITAMs) in their cytoplasmic domain. Upon TCR engagement, these motifs become phosphorylated by Src family protein tyrosine kinases LCK and FYN, resulting in the activation of downstream signaling pathways. In addition of this role of signal transduction in T-cell activation, CD3E plays an essential role in correct T-cell development. Also participates in internalization and cell surface down-regulation of TCR-CD3 complexes via endocytosis sequences present in CD3E cytosolic region. In addition to its role as a TCR coreceptor, it serves as a receptor for ITPRIPL1. Ligand recognition inhibits T-cell activation by promoting interaction with NCK1, which prevents CD3E-ZAP70 interaction and blocks the ERK-NFkB signaling cascade and calcium influx. The sequence is that of T-cell surface glycoprotein CD3 epsilon chain (Cd3e) from Mus musculus (Mouse).